Consider the following 249-residue polypeptide: UPF0758 protein BMEI0718 (249 aa).

The interval Met1 to His34 is disordered. Residues Pro24–His34 are compositionally biased toward basic and acidic residues. Residues Val127 to Ile249 form the MPN domain. Zn(2+)-binding residues include His198, His200, and Asp211. Residues His198–Asp211 carry the JAMM motif motif.

The protein belongs to the UPF0758 family.

The polypeptide is UPF0758 protein BMEI0718 (Brucella melitensis biotype 1 (strain ATCC 23456 / CCUG 17765 / NCTC 10094 / 16M)).